Consider the following 608-residue polypeptide: DNA mismatch repair protein MutL (608 aa).

The tract at residues 363 to 397 (ASLAMARKPDPPRFHETARPQPDPRHTPGTESVSV) is disordered. Basic and acidic residues predominate over residues 369 to 390 (RKPDPPRFHETARPQPDPRHTP).

Belongs to the DNA mismatch repair MutL/HexB family.

Functionally, this protein is involved in the repair of mismatches in DNA. It is required for dam-dependent methyl-directed DNA mismatch repair. May act as a 'molecular matchmaker', a protein that promotes the formation of a stable complex between two or more DNA-binding proteins in an ATP-dependent manner without itself being part of a final effector complex. The polypeptide is DNA mismatch repair protein MutL (Pelobacter propionicus (strain DSM 2379 / NBRC 103807 / OttBd1)).